Here is a 792-residue protein sequence, read N- to C-terminus: Phenylalanine--tRNA ligase beta subunit (792 aa).

Residues 39-150 (APAFHKVVVA…PDAPVGTDFR (112 aa)) form the tRNA-binding domain. The region spanning 405 to 480 (PARDPIRLGL…RMYGYNRIAA (76 aa)) is the B5 domain. Positions 458, 464, 467, and 468 each coordinate Mg(2+). In terms of domain architecture, FDX-ACB spans 698-791 (SKYPPIRRDI…LENRFGARLR (94 aa)).

Belongs to the phenylalanyl-tRNA synthetase beta subunit family. Type 1 subfamily. Tetramer of two alpha and two beta subunits. Mg(2+) serves as cofactor.

Its subcellular location is the cytoplasm. The catalysed reaction is tRNA(Phe) + L-phenylalanine + ATP = L-phenylalanyl-tRNA(Phe) + AMP + diphosphate + H(+). The polypeptide is Phenylalanine--tRNA ligase beta subunit (Nitrosospira multiformis (strain ATCC 25196 / NCIMB 11849 / C 71)).